A 73-amino-acid polypeptide reads, in one-letter code: Small, acid-soluble spore protein C5 (73 aa).

The protein belongs to the alpha/beta-type SASP family.

SASP are bound to spore DNA. They are double-stranded DNA-binding proteins that cause DNA to change to an a-like conformation. They protect the DNA backbone from chemical and enzymatic cleavage and are thus involved in dormant spore's high resistance to UV light. This is Small, acid-soluble spore protein C5 (SASP-C5) from Priestia megaterium (Bacillus megaterium).